The chain runs to 647 residues: Neuronal PAS domain-containing protein 4-like (647 aa).

The tract at residues 16–29 (KRFRSTKGASKARR) is basic motif; degenerate. One can recognise a bHLH domain in the interval 16-67 (KRFRSTKGASKARRDQMNSEIRNLRALLPISPEHRLSYLHSMSITCTYIRKS). Residues 30 to 67 (DQMNSEIRNLRALLPISPEHRLSYLHSMSITCTYIRKS) form a helix-loop-helix motif region. 2 PAS domains span residues 117–181 (VLQA…SPSG) and 238–274 (SADMRLASASSSVLFHLGFSADELIGRSWYELLHPDD).

Heterodimer; efficient DNA binding requires dimerization with another bHLH protein. In terms of tissue distribution, specifically expressed in endothelial and hematopoietic precursor cells.

The protein localises to the nucleus. Functionally, transcription factor specifically expressed in endothelial and hematopoietic precursor cells that acts as a key regulator of the endothelial differentiation cascade. Acts as an early-response transcription factor that regulates the expression of early regulators of endothelial and haematopoietic differentiation, such as etv2 and tal1. This chain is Neuronal PAS domain-containing protein 4-like, found in Danio rerio (Zebrafish).